The following is a 393-amino-acid chain: MAKESYKRDKPHVNIGTIGHVDHGKTTLTAAITSVLAKQGLAAARDFGSIDKAPEERERGITISTAHVEYQTKKRHYAHIDCPGHADYIKNMITGAAQMDGAILVVAGTDGPMPQTREHILLARQVNVPSLVVFLNKVDIADPELIELVELELRELLTQYNFPGDDIPIVKGSALKALEGDPEGEKAIMELMDAVDSFIPDPVRDIDKPFLMPVEDVFSISGRGTVGTGRIERGRIKINEEVEIVGLRPTRKSVVTGIEMFQKLLDEGQAGDNAGLLLRGVDKTELERGMVIAKPGTIKPHTKFKAEVYILKKEEGGRHTPFFNGYRPQFYFRTTDVTGSVTLPEGVEMVMPGDNLGVEVELLAPIAMDEGLRFAIREGGRTVGAGSVTTIIE.

The tr-type G domain maps to 10–203 (KPHVNIGTIG…AVDSFIPDPV (194 aa)). The segment at 19 to 26 (GHVDHGKT) is G1. GTP is bound at residue 19–26 (GHVDHGKT). A Mg(2+)-binding site is contributed by Thr26. The interval 60-64 (GITIS) is G2. Residues 81–84 (DCPG) are G3. Residues 81 to 85 (DCPGH) and 136 to 139 (NKVD) each bind GTP. Residues 136 to 139 (NKVD) are G4. A G5 region spans residues 173-175 (SAL).

The protein belongs to the TRAFAC class translation factor GTPase superfamily. Classic translation factor GTPase family. EF-Tu/EF-1A subfamily. As to quaternary structure, monomer.

The protein resides in the cytoplasm. It carries out the reaction GTP + H2O = GDP + phosphate + H(+). Functionally, GTP hydrolase that promotes the GTP-dependent binding of aminoacyl-tRNA to the A-site of ribosomes during protein biosynthesis. The sequence is that of Elongation factor Tu from Pelodictyon phaeoclathratiforme (strain DSM 5477 / BU-1).